A 43-amino-acid chain; its full sequence is Protein PsbN (43 aa).

The helical transmembrane segment at 7–27 (FVVGILVALVLITAFAVYTAF) threads the bilayer.

The protein belongs to the PsbN family.

It localises to the cell inner membrane. May play a role in photosystem I and II biogenesis. The protein is Protein PsbN of Gloeobacter violaceus (strain ATCC 29082 / PCC 7421).